The following is a 346-amino-acid chain: Leucine zipper protein 2 (346 aa).

A signal peptide spans 1-19 (MKFSPAHYLLPLLPALVLS). The stretch at 16 to 211 (LVLSTRQDYE…QMKAMKETVQ (196 aa)) forms a coiled coil. Asparagine 133 is a glycosylation site (N-linked (GlcNAc...) asparagine). The interval 164 to 192 (LRYGKKDLLFKAQQLTDLEQKLAVAKNEL) is leucine-zipper. Residues 225–346 (ALSLITSNPT…GMAAREEKIL (122 aa)) form a disordered region. The segment covering 250 to 261 (AAAKSKPQQSAS) has biased composition (low complexity). Polar residues predominate over residues 262–283 (GNNESSQVESTKEGSPSTTACD). Asparagine 264 carries an N-linked (GlcNAc...) asparagine glycan. Positions 286 to 298 (DEGRTCSIKHKES) are enriched in basic and acidic residues. Asparagine 302 carries an N-linked (GlcNAc...) asparagine glycan.

It is found in the secreted. The sequence is that of Leucine zipper protein 2 (LUZP2) from Pongo abelii (Sumatran orangutan).